The primary structure comprises 405 residues: uncharacterized protein (405 aa).

12 helical membrane-spanning segments follow: residues 19–39, 47–67, 85–105, 107–127, 156–176, 178–198, 224–244, 252–272, 283–303, 309–329, 344–364, and 366–386; these read IVSIVMFNFASYLTIGLPLAV, VMGFSAFWAGLVISLQYFATL, IVVFGLCGCFLSGLGYLTAGL, ASLPVISLLLLCLGRVILGIG, GIVTYGAMAMGAPLGVVFYHW, GLQALALIIMGVALVAILLAI, GMALALASAGFGVIATFITLF, GAAFALTLFSCAFVGTRLLFP, VAMICFSVEIIGLLLVGVATM, IGVLLAGAGFSLVFPALGVVA, TYTVFMDLSLGVTGPLAGLVM, and WAGVPVIYLAAAGLVAIALLL.

Belongs to the major facilitator superfamily. YhhS family.

Its subcellular location is the cell inner membrane. This is an uncharacterized protein from Shigella flexneri.